Here is a 141-residue protein sequence, read N- to C-terminus: Hemoglobin subunit alpha-1/2 (141 aa).

The Globin domain occupies 1–141 (VLSAABKSBV…VSTVLTSKYR (141 aa)). A Phosphoserine modification is found at serine 3. N6-succinyllysine occurs at positions 7 and 11. Lysine 16 is modified (N6-acetyllysine; alternate). The residue at position 16 (lysine 16) is an N6-succinyllysine; alternate. Position 24 is a phosphotyrosine (tyrosine 24). Phosphoserine is present on serine 35. The residue at position 40 (lysine 40) is an N6-succinyllysine. Serine 49 is modified (phosphoserine). Histidine 58 lines the O2 pocket. Histidine 87 is a heme b binding site. Serine 102 bears the Phosphoserine mark. Threonine 108 is modified (phosphothreonine). Serine 124 is subject to Phosphoserine. 2 positions are modified to phosphothreonine: threonine 134 and threonine 137. Phosphoserine is present on serine 138.

It belongs to the globin family. As to quaternary structure, heterotetramer of two alpha chains and two beta chains. As to expression, red blood cells.

Involved in oxygen transport from the lung to the various peripheral tissues. This is Hemoglobin subunit alpha-1/2 from Odocoileus virginianus virginianus (Virginia white-tailed deer).